The primary structure comprises 214 residues: ATP phosphoribosyltransferase (214 aa).

The protein belongs to the ATP phosphoribosyltransferase family. Short subfamily. In terms of assembly, heteromultimer composed of HisG and HisZ subunits.

It localises to the cytoplasm. It catalyses the reaction 1-(5-phospho-beta-D-ribosyl)-ATP + diphosphate = 5-phospho-alpha-D-ribose 1-diphosphate + ATP. It participates in amino-acid biosynthesis; L-histidine biosynthesis; L-histidine from 5-phospho-alpha-D-ribose 1-diphosphate: step 1/9. Its function is as follows. Catalyzes the condensation of ATP and 5-phosphoribose 1-diphosphate to form N'-(5'-phosphoribosyl)-ATP (PR-ATP). Has a crucial role in the pathway because the rate of histidine biosynthesis seems to be controlled primarily by regulation of HisG enzymatic activity. This chain is ATP phosphoribosyltransferase, found in Nostoc punctiforme (strain ATCC 29133 / PCC 73102).